The primary structure comprises 401 residues: Mitochondrial distribution and morphology protein 12 (401 aa).

The SMP-LTD domain maps to 1 to 401 (MSIDINWDTL…VYPSFWTFLV (401 aa)). Over residues 70 to 88 (YEEDEDYPDNEDDDDDEAG) the composition is skewed to acidic residues. Disordered stretches follow at residues 70-95 (YEED…NPRN) and 190-247 (SLTL…EKSP). A compositionally biased stretch (low complexity) spans 195–205 (PQSHPDPSSRP). Positions 209–220 (HQHDDERRRSLA) are enriched in basic and acidic residues.

This sequence belongs to the MDM12 family. Component of the ER-mitochondria encounter structure (ERMES) or MDM complex, composed of MMM1, MDM10, MDM12 and MDM34. An MMM1 homodimer associates with one molecule of MDM12 on each side in a pairwise head-to-tail manner, and the SMP-LTD domains of MMM1 and MDM12 generate a continuous hydrophobic tunnel for phospholipid trafficking.

The protein resides in the mitochondrion outer membrane. It localises to the endoplasmic reticulum membrane. Component of the ERMES/MDM complex, which serves as a molecular tether to connect the endoplasmic reticulum (ER) and mitochondria. Components of this complex are involved in the control of mitochondrial shape and protein biogenesis, and function in nonvesicular lipid trafficking between the ER and mitochondria. MDM12 is required for the interaction of the ER-resident membrane protein MMM1 and the outer mitochondrial membrane-resident beta-barrel protein MDM10. The MDM12-MMM1 subcomplex functions in the major beta-barrel assembly pathway that is responsible for biogenesis of all mitochondrial outer membrane beta-barrel proteins, and acts in a late step after the SAM complex. The MDM10-MDM12-MMM1 subcomplex further acts in the TOM40-specific pathway after the action of the MDM12-MMM1 complex. Essential for establishing and maintaining the structure of mitochondria and maintenance of mtDNA nucleoids. The chain is Mitochondrial distribution and morphology protein 12 from Phaeosphaeria nodorum (strain SN15 / ATCC MYA-4574 / FGSC 10173) (Glume blotch fungus).